The primary structure comprises 440 residues: Chromosome partition protein MukF (440 aa).

The interval 208–236 (LSETSGTLRELQDTLEAAGDKLQANLLRI) is leucine-zipper.

Belongs to the MukF family. As to quaternary structure, interacts, and probably forms a ternary complex, with MukE and MukB via its C-terminal region. The complex formation is stimulated by calcium or magnesium. It is required for an interaction between MukE and MukB.

Its subcellular location is the cytoplasm. The protein localises to the nucleoid. Involved in chromosome condensation, segregation and cell cycle progression. May participate in facilitating chromosome segregation by condensation DNA from both sides of a centrally located replisome during cell division. Not required for mini-F plasmid partitioning. Probably acts via its interaction with MukB and MukE. Overexpression results in anucleate cells. It has a calcium binding activity. The chain is Chromosome partition protein MukF from Shigella boydii serotype 4 (strain Sb227).